Reading from the N-terminus, the 524-residue chain is Bifunctional purine biosynthesis protein PurH (524 aa).

Residues 1–145 (MIKQALLSVS…KNHRDVTVIV (145 aa)) enclose the MGS-like domain.

It belongs to the PurH family.

The enzyme catalyses (6R)-10-formyltetrahydrofolate + 5-amino-1-(5-phospho-beta-D-ribosyl)imidazole-4-carboxamide = 5-formamido-1-(5-phospho-D-ribosyl)imidazole-4-carboxamide + (6S)-5,6,7,8-tetrahydrofolate. It carries out the reaction IMP + H2O = 5-formamido-1-(5-phospho-D-ribosyl)imidazole-4-carboxamide. It functions in the pathway purine metabolism; IMP biosynthesis via de novo pathway; 5-formamido-1-(5-phospho-D-ribosyl)imidazole-4-carboxamide from 5-amino-1-(5-phospho-D-ribosyl)imidazole-4-carboxamide (10-formyl THF route): step 1/1. Its pathway is purine metabolism; IMP biosynthesis via de novo pathway; IMP from 5-formamido-1-(5-phospho-D-ribosyl)imidazole-4-carboxamide: step 1/1. The polypeptide is Bifunctional purine biosynthesis protein PurH (Cupriavidus taiwanensis (strain DSM 17343 / BCRC 17206 / CCUG 44338 / CIP 107171 / LMG 19424 / R1) (Ralstonia taiwanensis (strain LMG 19424))).